We begin with the raw amino-acid sequence, 602 residues long: Sulfite reductase [NADPH] hemoprotein beta-component (602 aa).

A disordered region spans residues 1 to 23 (MDDTKTASPAPARAYETPPAERP). [4Fe-4S] cluster-binding residues include Cys458, Cys464, Cys503, and Cys507. Siroheme is bound at residue Cys507.

Belongs to the nitrite and sulfite reductase 4Fe-4S domain family. Alpha(8)-beta(8). The alpha component is a flavoprotein, the beta component is a hemoprotein. Siroheme serves as cofactor. It depends on [4Fe-4S] cluster as a cofactor.

The enzyme catalyses hydrogen sulfide + 3 NADP(+) + 3 H2O = sulfite + 3 NADPH + 4 H(+). It functions in the pathway sulfur metabolism; hydrogen sulfide biosynthesis; hydrogen sulfide from sulfite (NADPH route): step 1/1. Its function is as follows. Component of the sulfite reductase complex that catalyzes the 6-electron reduction of sulfite to sulfide. This is one of several activities required for the biosynthesis of L-cysteine from sulfate. The polypeptide is Sulfite reductase [NADPH] hemoprotein beta-component (Methylobacterium sp. (strain 4-46)).